Consider the following 180-residue polypeptide: Stathmin-3 (180 aa).

2 S-palmitoyl cysteine lipidation sites follow: Cys22 and Cys24. The SLD domain maps to 38–180 (GDMEVKQLDK…NKEQREEMSG (143 aa)). Residues Ser50, Ser60, Ser65, Ser68, Ser72, Ser73, and Ser81 each carry the phosphoserine modification. Residues 58 to 82 (LKSPSDLSPESPMLSSPPKRKDTSL) are disordered. Low complexity predominate over residues 60-74 (SPSDLSPESPMLSSP). The stretch at 76 to 179 (KRKDTSLEEL…RNKEQREEMS (104 aa)) forms a coiled coil.

It belongs to the stathmin family. Interacts with STAT3. Interacts with CLU (secreted form); this interaction may act as an important modulator during neuronal differentiation. Post-translationally, N-terminal palmitoylation promotes specific anchoring to the cytosolic leaflet of Golgi membranes and subsequent vesicular trafficking along dendrites and axons. Neuronal Stathmins are substrates for palmitoyltransferases ZDHHC3, ZDHHC7 and ZDHHC15.

It localises to the golgi apparatus. Its subcellular location is the cell projection. The protein resides in the growth cone. The protein localises to the axon. It is found in the cytoplasm. It localises to the cytosol. Functionally, exhibits microtubule-destabilizing activity, which is antagonized by STAT3. The protein is Stathmin-3 (STMN3) of Bos taurus (Bovine).